Here is a 95-residue protein sequence, read N- to C-terminus: Aspartyl/glutamyl-tRNA(Asn/Gln) amidotransferase subunit C (95 aa).

Positions 51–95 are disordered; the sequence is PTSHATLTSSRLREDVTRPSLPPEKSLANAPAKSDTSFAVPKIIE.

This sequence belongs to the GatC family. As to quaternary structure, heterotrimer of A, B and C subunits.

It catalyses the reaction L-glutamyl-tRNA(Gln) + L-glutamine + ATP + H2O = L-glutaminyl-tRNA(Gln) + L-glutamate + ADP + phosphate + H(+). The catalysed reaction is L-aspartyl-tRNA(Asn) + L-glutamine + ATP + H2O = L-asparaginyl-tRNA(Asn) + L-glutamate + ADP + phosphate + 2 H(+). Its function is as follows. Allows the formation of correctly charged Asn-tRNA(Asn) or Gln-tRNA(Gln) through the transamidation of misacylated Asp-tRNA(Asn) or Glu-tRNA(Gln) in organisms which lack either or both of asparaginyl-tRNA or glutaminyl-tRNA synthetases. The reaction takes place in the presence of glutamine and ATP through an activated phospho-Asp-tRNA(Asn) or phospho-Glu-tRNA(Gln). The chain is Aspartyl/glutamyl-tRNA(Asn/Gln) amidotransferase subunit C from Myxococcus xanthus (strain DK1622).